The primary structure comprises 550 residues: Leucine-rich repeat LGI family member 2 (550 aa).

The first 25 residues, 1 to 25 (MALWRGGGALGLLLLSAACLIPPSA), serve as a signal peptide directing secretion. The 37-residue stretch at 26–62 (QVRRLARCPATCSCTKESIICVGSSWVPRIVPGDISS) folds into the LRRNT domain. N-linked (GlcNAc...) asparagine glycosylation is present at asparagine 67. LRR repeat units lie at residues 83-104 (SLQL…AFAG) and 107-128 (HLEY…AFRG). Residues 140–190 (NKFECDCKAKWLYLWLKMTNSTVSDVLCIGPPEYQEKKLNEVTSFDYECTT) form the LRRCT domain. The N-linked (GlcNAc...) asparagine glycan is linked to asparagine 159. 7 EAR repeats span residues 224-266 (DFVV…EWDH), 270-312 (NFRS…KYDE), 316-363 (KFVK…KWNS), 365-408 (GFYS…QWNK), 412-455 (KFVP…RWNS), 457-499 (QFVE…QWDK), and 503-545 (QFKK…EHII). Asparagine 276 carries an N-linked (GlcNAc...) asparagine glycan. The N-linked (GlcNAc...) asparagine glycan is linked to asparagine 407.

As to expression, brain.

Its subcellular location is the secreted. In terms of biological role, required for the development of soma-targeting inhibitory GABAergic synapses made by parvalbumin-positive basket cells. This chain is Leucine-rich repeat LGI family member 2 (Lgi2), found in Mus musculus (Mouse).